Consider the following 657-residue polypeptide: ER degradation-enhancing alpha-mannosidase-like protein 1 (657 aa).

The Cytoplasmic segment spans residues 1 to 4; that stretch reads MQWR. A helical; Signal-anchor for type II membrane protein transmembrane segment spans residues 5-25; that stretch reads ALVLGLVLLRLGLHGVLWLVF. Over 26 to 657 the chain is Lumenal; the sequence is GLGPSMGFYQ…RQIDQMVGLI (632 aa). A disordered region spans residues 48–94; it reads SPDGPASPTSGPVGRPGGVSGPSWLQPPGTGAAQSPRKAPRRPGPGM. N-linked (GlcNAc...) asparagine glycans are attached at residues N181, N198, N299, N342, and N624.

The protein belongs to the glycosyl hydrolase 47 family. As to quaternary structure, interacts with DNAJC10. Interacts with DERL2 and DERL3. Binds to SEL1L.

The protein resides in the endoplasmic reticulum membrane. Extracts misfolded glycoproteins, but not glycoproteins undergoing productive folding, from the calnexin cycle. It is directly involved in endoplasmic reticulum-associated degradation (ERAD) and targets misfolded glycoproteins for degradation in an N-glycan-independent manner, probably by forming a complex with SEL1L. It has low mannosidase activity, catalyzing mannose trimming from Man8GlcNAc2 to Man7GlcNAc2. This is ER degradation-enhancing alpha-mannosidase-like protein 1 (EDEM1) from Homo sapiens (Human).